The primary structure comprises 305 residues: PI protein (305 aa).

The protein belongs to the initiator RepB protein family. In terms of assembly, homodimer.

Initiation for plasmid R6K DNA replication. The sequence is that of PI protein (pir) from Escherichia coli.